The primary structure comprises 665 residues: F-box/LRR-repeat protein 3 (665 aa).

The F-box domain occupies 11–60; sequence KPFDLLSEELVFIILDLISPNPSDLKSFSLTCKSFYQLESKHRGSLKPLR. LRR repeat units follow at residues 61 to 81, 82 to 108, 109 to 134, 135 to 159, 160 to 185, 186 to 211, 214 to 235, 236 to 261, 262 to 287, 288 to 312, 313 to 338, 339 to 364, 365 to 390, 391 to 416, 419 to 440, 441 to 466, 467 to 492, 493 to 517, 518 to 543, 544 to 569, and 594 to 619; these read SDYL…DLTF, CPRV…DLSR, SGSF…DLSN, ATEM…KLGR, CKML…SLKW, CVGV…DLSY, ITGK…LLEG, CFGV…DASS, CQNL…DLSH, CSSV…IRLD, GCSV…SLSK, CVSV…DITC, CRKL…KMES, CSLV…DLTD, IDDE…KLGI, CLNI…DLYR, SVGI…NISY, CQDI…ESRG, CPNI…DLKK, CPSI…NVSD, and SSGL…KLHA.

This chain is F-box/LRR-repeat protein 3 (FBL3), found in Arabidopsis thaliana (Mouse-ear cress).